We begin with the raw amino-acid sequence, 350 residues long: Protein RecA (350 aa).

Residue 68–75 coordinates ATP; it reads GPESSGKT.

The protein belongs to the RecA family.

The protein localises to the cytoplasm. Functionally, can catalyze the hydrolysis of ATP in the presence of single-stranded DNA, the ATP-dependent uptake of single-stranded DNA by duplex DNA, and the ATP-dependent hybridization of homologous single-stranded DNAs. It interacts with LexA causing its activation and leading to its autocatalytic cleavage. The polypeptide is Protein RecA (Mycolicibacterium gilvum (strain PYR-GCK) (Mycobacterium gilvum (strain PYR-GCK))).